The chain runs to 306 residues: Aspartate carbamoyltransferase catalytic subunit (306 aa).

The carbamoyl phosphate site is built by R55 and T56. Residue K84 participates in L-aspartate binding. Residues R105, H133, and Q136 each coordinate carbamoyl phosphate. Residues R166 and R227 each contribute to the L-aspartate site. Carbamoyl phosphate is bound by residues L265 and P266.

Belongs to the aspartate/ornithine carbamoyltransferase superfamily. ATCase family. In terms of assembly, heterododecamer (2C3:3R2) of six catalytic PyrB chains organized as two trimers (C3), and six regulatory PyrI chains organized as three dimers (R2).

The catalysed reaction is carbamoyl phosphate + L-aspartate = N-carbamoyl-L-aspartate + phosphate + H(+). Its pathway is pyrimidine metabolism; UMP biosynthesis via de novo pathway; (S)-dihydroorotate from bicarbonate: step 2/3. Its function is as follows. Catalyzes the condensation of carbamoyl phosphate and aspartate to form carbamoyl aspartate and inorganic phosphate, the committed step in the de novo pyrimidine nucleotide biosynthesis pathway. The chain is Aspartate carbamoyltransferase catalytic subunit from Neisseria meningitidis serogroup A / serotype 4A (strain DSM 15465 / Z2491).